We begin with the raw amino-acid sequence, 151 residues long: Large ribosomal subunit protein uL13 (151 aa).

The tract at residues 126 to 151 (YPGPNHPHQAQKPEELTLNTIPNGDK) is disordered. Residues 142 to 151 (TLNTIPNGDK) are compositionally biased toward polar residues.

This sequence belongs to the universal ribosomal protein uL13 family. Part of the 50S ribosomal subunit.

Its function is as follows. This protein is one of the early assembly proteins of the 50S ribosomal subunit, although it is not seen to bind rRNA by itself. It is important during the early stages of 50S assembly. This chain is Large ribosomal subunit protein uL13, found in Crocosphaera subtropica (strain ATCC 51142 / BH68) (Cyanothece sp. (strain ATCC 51142)).